The chain runs to 689 residues: Protein asunder (689 aa).

Residues N521–T550 adopt a coiled-coil conformation. Residues G578 to R619 are disordered. The segment covering S600–K614 has biased composition (low complexity). Positions L613–R619 match the Nuclear localization signal (NLS) motif.

This sequence belongs to the Integrator subunit 13 family. As to quaternary structure, belongs to the multiprotein complex Integrator, at least composed of IntS1, IntS2, IntS3, IntS4, omd/IntS5, IntS6, defl/IntS7, IntS8, IntS9, IntS10, IntS11, IntS12, asun/IntS13, IntS14 and IntS15. The core complex associates with protein phosphatase 2A subunits mts/PP2A and Pp2A-29B, to form the Integrator-PP2A (INTAC) complex. Phosphorylated.

It localises to the nucleus. The protein resides in the cytoplasm. It is found in the perinuclear region. Functionally, component of the integrator complex, a multiprotein complex that terminates RNA polymerase II (Pol II) transcription in the promoter-proximal region of genes. The integrator complex provides a quality checkpoint during transcription elongation by driving premature transcription termination of transcripts that are unfavorably configured for transcriptional elongation: the complex terminates transcription by (1) catalyzing dephosphorylation of the C-terminal domain (CTD) of Pol II subunit Polr2A/Rbp1 and Spt5, and (2) degrading the exiting nascent RNA transcript via endonuclease activity. The integrator complex is also involved in the 3'-end processing of the U7 snRNA, and also the spliceosomal snRNAs U1, U2, U4 and U5. The protein is Protein asunder (asun) of Drosophila erecta (Fruit fly).